The chain runs to 277 residues: Pantothenate synthetase (277 aa).

26–33 (MGYLHQGH) provides a ligand contact to ATP. Histidine 33 acts as the Proton donor in catalysis. (R)-pantoate is bound at residue glutamine 57. Glutamine 57 lines the beta-alanine pocket. Residue 143–146 (GQKD) coordinates ATP. Position 149 (glutamine 149) interacts with (R)-pantoate. ATP is bound by residues valine 172 and 180–183 (LSSR).

Belongs to the pantothenate synthetase family. In terms of assembly, homodimer.

The protein localises to the cytoplasm. It carries out the reaction (R)-pantoate + beta-alanine + ATP = (R)-pantothenate + AMP + diphosphate + H(+). The protein operates within cofactor biosynthesis; (R)-pantothenate biosynthesis; (R)-pantothenate from (R)-pantoate and beta-alanine: step 1/1. Catalyzes the condensation of pantoate with beta-alanine in an ATP-dependent reaction via a pantoyl-adenylate intermediate. This Chloroflexus aggregans (strain MD-66 / DSM 9485) protein is Pantothenate synthetase.